The following is a 313-amino-acid chain: Porphobilinogen deaminase (313 aa).

Cys-242 carries the S-(dipyrrolylmethanemethyl)cysteine modification.

This sequence belongs to the HMBS family. Monomer. Dipyrromethane serves as cofactor.

The enzyme catalyses 4 porphobilinogen + H2O = hydroxymethylbilane + 4 NH4(+). It participates in porphyrin-containing compound metabolism; protoporphyrin-IX biosynthesis; coproporphyrinogen-III from 5-aminolevulinate: step 2/4. Tetrapolymerization of the monopyrrole PBG into the hydroxymethylbilane pre-uroporphyrinogen in several discrete steps. This is Porphobilinogen deaminase from Escherichia coli O6:H1 (strain CFT073 / ATCC 700928 / UPEC).